The chain runs to 96 residues: UPF0235 protein NT01EI_0281 (96 aa).

It belongs to the UPF0235 family.

This Edwardsiella ictaluri (strain 93-146) protein is UPF0235 protein NT01EI_0281.